The following is a 142-amino-acid chain: Small ribosomal subunit protein uS12 (142 aa).

The disordered stretch occupies residues 1-44 (MANGKYAARKLKQDRQKHRWSDSDYARRARGLGKKSDPLEGAPQ). Residues 11 to 27 (LKQDRQKHRWSDSDYAR) show a composition bias toward basic and acidic residues.

This sequence belongs to the universal ribosomal protein uS12 family. Part of the 30S ribosomal subunit.

With S4 and S5 plays an important role in translational accuracy. Located at the interface of the 30S and 50S subunits. The protein is Small ribosomal subunit protein uS12 of Natronomonas pharaonis (strain ATCC 35678 / DSM 2160 / CIP 103997 / JCM 8858 / NBRC 14720 / NCIMB 2260 / Gabara) (Halobacterium pharaonis).